An 83-amino-acid chain; its full sequence is uncharacterized protein (83 aa).

Residues 58–80 (YWGYGAAYGISLGLIAGVALAGL) form a helical membrane-spanning segment.

The protein localises to the membrane. This is an uncharacterized protein from Bacillus subtilis (strain 168).